We begin with the raw amino-acid sequence, 297 residues long: DNA processing protein DprA (297 aa).

The protein belongs to the DprA/Smf family. As to quaternary structure, interacts with RecA. Interacts with ComFA and ComFC.

Its subcellular location is the cytoplasm. Protein that helps load RecA onto ssDNA during transformation. Binds cooperatively to circular ssDNA, is able to bridge different segments of DNA. Favors the loading of RecA onto SsbA- or SsbB-coated ssDNA and formation of RecA-DNA filaments. RecA-ATP cannot catalyze homologous DNA strand exchange; SsbA and DprA activate strand exchange by RecA-ATP. The chain is DNA processing protein DprA from Bacillus subtilis (strain 168).